The primary structure comprises 71 residues: UPF0499 protein ACLA_083080 (71 aa).

The N-terminal stretch at 1–18 (MKFLNILTLAFITGMASA) is a signal peptide. Cystine bridges form between Cys-44/Cys-58, Cys-48/Cys-61, and Cys-54/Cys-68.

Belongs to the UPF0499 family.

Its subcellular location is the secreted. This chain is UPF0499 protein ACLA_083080, found in Aspergillus clavatus (strain ATCC 1007 / CBS 513.65 / DSM 816 / NCTC 3887 / NRRL 1 / QM 1276 / 107).